A 159-amino-acid chain; its full sequence is Transcription elongation factor GreA (159 aa).

Residues Arg-5–Ile-77 adopt a coiled-coil conformation.

This sequence belongs to the GreA/GreB family.

Its function is as follows. Necessary for efficient RNA polymerase transcription elongation past template-encoded arresting sites. The arresting sites in DNA have the property of trapping a certain fraction of elongating RNA polymerases that pass through, resulting in locked ternary complexes. Cleavage of the nascent transcript by cleavage factors such as GreA or GreB allows the resumption of elongation from the new 3'terminus. GreA releases sequences of 2 to 3 nucleotides. The polypeptide is Transcription elongation factor GreA (Alkaliphilus oremlandii (strain OhILAs) (Clostridium oremlandii (strain OhILAs))).